We begin with the raw amino-acid sequence, 137 residues long: Histone H2B.1, sperm (137 aa).

The tract at residues 1–43 (MPSQKSPTKRSPTKRSPQKGGKGAKRGGKAGKRRRGVAVKRRR) is disordered. Short sequence motifs (SPKK motif) lie at residues 6–9 (SPTK), 11–14 (SPTK), and 16–19 (SPQK). Residues 7 to 43 (PTKRSPTKRSPQKGGKGAKRGGKAGKRRRGVAVKRRR) are compositionally biased toward basic residues. A phosphoserine mark is found at Ser11 and Ser16. Ser124 carries O-linked (GlcNAc) serine glycosylation. A Glycyl lysine isopeptide (Lys-Gly) (interchain with G-Cter in ubiquitin) cross-link involves residue Lys132.

This sequence belongs to the histone H2B family. The nucleosome is a histone octamer containing two molecules each of H2A, H2B, H3 and H4 assembled in one H3-H4 heterotetramer and two H2A-H2B heterodimers. The octamer wraps approximately 147 bp of DNA. Monoubiquitination of Lys-132 gives a specific tag for epigenetic transcriptional activation and is also prerequisite for histone H3 'Lys-4' and 'Lys-79' methylation. In terms of processing, phosphorylated on SPKK motifs 2 and 3; which may regulate DNA binding. Dephosphorylated during maturation of spermatids to mature sperm and rephosphorylated at fertilization. Post-translationally, glcNAcylation at Ser-124 promotes monoubiquitination of Lys-132. It fluctuates in response to extracellular glucose, and associates with transcribed genes.

The protein resides in the nucleus. The protein localises to the chromosome. Core component of nucleosome. Nucleosomes wrap and compact DNA into chromatin, limiting DNA accessibility to the cellular machineries which require DNA as a template. Histones thereby play a central role in transcription regulation, DNA repair, DNA replication and chromosomal stability. DNA accessibility is regulated via a complex set of post-translational modifications of histones, also called histone code, and nucleosome remodeling. This chain is Histone H2B.1, sperm, found in Psammechinus miliaris (Green sea urchin).